The following is a 445-amino-acid chain: Methylthioribose-1-phosphate isomerase (445 aa).

Asp-286 serves as the catalytic Proton donor.

This sequence belongs to the eIF-2B alpha/beta/delta subunits family. MtnA subfamily.

It is found in the cytoplasm. The protein resides in the nucleus. It carries out the reaction 5-(methylsulfanyl)-alpha-D-ribose 1-phosphate = 5-(methylsulfanyl)-D-ribulose 1-phosphate. It functions in the pathway amino-acid biosynthesis; L-methionine biosynthesis via salvage pathway; L-methionine from S-methyl-5-thio-alpha-D-ribose 1-phosphate: step 1/6. Catalyzes the interconversion of methylthioribose-1-phosphate (MTR-1-P) into methylthioribulose-1-phosphate (MTRu-1-P). This Sclerotinia sclerotiorum (strain ATCC 18683 / 1980 / Ss-1) (White mold) protein is Methylthioribose-1-phosphate isomerase (mri1).